The following is a 664-amino-acid chain: 26S rRNA (cytosine-C(5))-methyltransferase nsun-1 (664 aa).

Residues Met-1 to Pro-105 form a disordered region. Over residues Pro-38–Lys-52 the composition is skewed to basic residues. Positions Lys-53–Leu-68 are enriched in basic and acidic residues. The segment covering Ser-84–Asp-99 has biased composition (acidic residues). S-adenosyl-L-methionine is bound by residues Cys-313–Lys-319, Asp-337, and Asp-382. Cys-439 serves as the catalytic Nucleophile. The segment at Lys-513 to Gln-664 is disordered. Over residues Val-519–Ala-528 the composition is skewed to basic and acidic residues. The span at Glu-541–Glu-550 shows a compositional bias: acidic residues. The span at Lys-563–Lys-572 shows a compositional bias: basic residues. Positions Lys-606–Asp-618 are enriched in basic and acidic residues. Composition is skewed to basic residues over residues Lys-627–Ala-644 and Val-652–Gln-664.

Belongs to the class I-like SAM-binding methyltransferase superfamily. RsmB/NOP family.

It localises to the nucleus. It is found in the nucleolus. The catalysed reaction is a cytidine in 26S rRNA + S-adenosyl-L-methionine = a 5-methylcytidine in 26S rRNA + S-adenosyl-L-homocysteine + H(+). Methyltransferase which methylates the carbon-5 position of cytosine 2982 to 5-methylcytosine (m5C2982) in 26S rRNA. May play a role in the translation of leucine and proline codons. May be required for the translation of specific mRNAs such as mRNAs involved in gonad development, collagen production and cuticle integrity. Plays a role in ensuring the correct localization of the germline-specific protein gld-1 during development. Not required for pre-rRNA processing, the production of mature 5S, 5.8S, 18S or 26S rRNAs or global translation. Plays a role in positively regulating fertility. The polypeptide is 26S rRNA (cytosine-C(5))-methyltransferase nsun-1 (Caenorhabditis elegans).